Consider the following 221-residue polypeptide: Hydrogenase expression/formation protein HupD (221 aa).

Ni(2+) contacts are provided by Glu-20, Asp-66, and His-97.

Belongs to the peptidase A31 family.

Functionally, not known. Could be involved in the processing of hydrogenase. The sequence is that of Hydrogenase expression/formation protein HupD (hupD) from Thiocapsa roseopersicina.